Reading from the N-terminus, the 249-residue chain is MPEPRRSTIDAGEVERFSALAAEWWNPNGKFRPLHKFNPVRLSYIRDQIAARFGRDPRAARPFEGLRILDIGCGGGLLCEPMARLGAEVVGADASETNIEVAKLHAAEGNVIVDYRATTAEDLADAGETFDVILNMEVVEHVADIDLFVAKCGQMVRPGGIMFVATINRTLKALGLAIIGAEYVLRWLPRGTHQFGKLVRPEELEKALGGASLTIIDRTGVTYNPLADRWARSKDMDVNYMVLAEKGSV.

4 residues coordinate S-adenosyl-L-methionine: arginine 41, glycine 72, aspartate 93, and methionine 136.

It belongs to the methyltransferase superfamily. UbiG/COQ3 family.

The enzyme catalyses a 3-demethylubiquinol + S-adenosyl-L-methionine = a ubiquinol + S-adenosyl-L-homocysteine + H(+). The catalysed reaction is a 3-(all-trans-polyprenyl)benzene-1,2-diol + S-adenosyl-L-methionine = a 2-methoxy-6-(all-trans-polyprenyl)phenol + S-adenosyl-L-homocysteine + H(+). The protein operates within cofactor biosynthesis; ubiquinone biosynthesis. Functionally, O-methyltransferase that catalyzes the 2 O-methylation steps in the ubiquinone biosynthetic pathway. The protein is Ubiquinone biosynthesis O-methyltransferase of Mesorhizobium japonicum (strain LMG 29417 / CECT 9101 / MAFF 303099) (Mesorhizobium loti (strain MAFF 303099)).